The following is a 1222-amino-acid chain: ATP-dependent helicase/nuclease subunit A (1222 aa).

One can recognise a UvrD-like helicase ATP-binding domain in the interval 39–495 (QKRTAQQIEA…ILLKENFRSQ (457 aa)). Position 60–67 (60–67 (ASAGSGKT)) interacts with ATP. In terms of domain architecture, UvrD-like helicase C-terminal spans 524–810 (QLIAGSHAQT…NLMTIHKSKG (287 aa)).

This sequence belongs to the helicase family. AddA subfamily. In terms of assembly, heterodimer of AddA and AddB/RexB. Mg(2+) serves as cofactor.

It catalyses the reaction Couples ATP hydrolysis with the unwinding of duplex DNA by translocating in the 3'-5' direction.. The enzyme catalyses ATP + H2O = ADP + phosphate + H(+). The heterodimer acts as both an ATP-dependent DNA helicase and an ATP-dependent, dual-direction single-stranded exonuclease. Recognizes the chi site generating a DNA molecule suitable for the initiation of homologous recombination. The AddA nuclease domain is required for chi fragment generation; this subunit has the helicase and 3' -&gt; 5' nuclease activities. The sequence is that of ATP-dependent helicase/nuclease subunit A from Streptococcus pyogenes serotype M2 (strain MGAS10270).